Consider the following 246-residue polypeptide: tRNA (guanine-N(1)-)-methyltransferase (246 aa).

S-adenosyl-L-methionine-binding positions include Gly114 and 134-139 (IGDYIL).

This sequence belongs to the RNA methyltransferase TrmD family. Homodimer.

The protein resides in the cytoplasm. The catalysed reaction is guanosine(37) in tRNA + S-adenosyl-L-methionine = N(1)-methylguanosine(37) in tRNA + S-adenosyl-L-homocysteine + H(+). Specifically methylates guanosine-37 in various tRNAs. The chain is tRNA (guanine-N(1)-)-methyltransferase from Coxiella burnetii (strain RSA 331 / Henzerling II).